The primary structure comprises 459 residues: UDP-N-acetylmuramate--L-alanine ligase (459 aa).

118–124 (GTHGKTT) contributes to the ATP binding site.

It belongs to the MurCDEF family.

The protein localises to the cytoplasm. The enzyme catalyses UDP-N-acetyl-alpha-D-muramate + L-alanine + ATP = UDP-N-acetyl-alpha-D-muramoyl-L-alanine + ADP + phosphate + H(+). It functions in the pathway cell wall biogenesis; peptidoglycan biosynthesis. Cell wall formation. The sequence is that of UDP-N-acetylmuramate--L-alanine ligase from Lachnospira eligens (strain ATCC 27750 / DSM 3376 / VPI C15-48 / C15-B4) (Eubacterium eligens).